The chain runs to 559 residues: Formate--tetrahydrofolate ligase (559 aa).

68–75 (TPAGEGKT) is a binding site for ATP.

The protein belongs to the formate--tetrahydrofolate ligase family.

The enzyme catalyses (6S)-5,6,7,8-tetrahydrofolate + formate + ATP = (6R)-10-formyltetrahydrofolate + ADP + phosphate. Its pathway is one-carbon metabolism; tetrahydrofolate interconversion. In Rhizobium etli (strain ATCC 51251 / DSM 11541 / JCM 21823 / NBRC 15573 / CFN 42), this protein is Formate--tetrahydrofolate ligase.